The chain runs to 235 residues: Nuclear egress protein 2 (235 aa).

Residues 1-214 (MNSTRLVYEL…IKPWTLSKKN (214 aa)) lie on the Perinuclear space side of the membrane. The helical transmembrane segment at 215–232 (IWTIILSLVAVVAIILKW) threads the bilayer. At 233–235 (REL) the chain is on the nuclear side.

This sequence belongs to the herpesviridae NEC2 protein family. In terms of assembly, forms a heterohexameric complex with NEC1. In terms of processing, phosphorylated.

It is found in the host nucleus inner membrane. Its function is as follows. Plays an essential role in virion nuclear egress, the first step of virion release from infected cell. Within the host nucleus, NEC1 interacts with the newly formed capsid through the vertexes and directs it to the inner nuclear membrane by associating with NEC2. Induces the budding of the capsid at the inner nuclear membrane as well as its envelopment into the perinuclear space. There, the NEC1/NEC2 complex promotes the fusion of the enveloped capsid with the outer nuclear membrane and the subsequent release of the viral capsid into the cytoplasm where it will reach the secondary budding sites in the host Golgi or trans-Golgi network. This Saimiri sciureus (Common squirrel monkey) protein is Nuclear egress protein 2.